Consider the following 145-residue polypeptide: Transcription elongation factor 1 (145 aa).

4 residues coordinate Zn(2+): C25, C28, C49, and C52. S55 is subject to Phosphoserine. The tract at residues 80–145 is disordered; sequence VNSGRGSDTD…RGALVDSDDE (66 aa). Acidic residues-rich tracts occupy residues 88–104 and 113–126; these read TDDG…SDSE and GEID…DSDE. Phosphoserine is present on residues S117, S124, and S142.

Belongs to the ELOF1 family.

It localises to the nucleus. Transcription elongation factor implicated in the maintenance of proper chromatin structure in actively transcribed regions. The chain is Transcription elongation factor 1 (ELF1) from Saccharomyces cerevisiae (strain ATCC 204508 / S288c) (Baker's yeast).